The following is a 137-amino-acid chain: Large ribosomal subunit protein uL16 (137 aa).

A compositionally biased stretch (basic residues) spans 1–17 (MLSPKRTKFRKQQRGRM). Residues 1–24 (MLSPKRTKFRKQQRGRMRGNANSG) form a disordered region.

Belongs to the universal ribosomal protein uL16 family. As to quaternary structure, part of the 50S ribosomal subunit.

Functionally, binds 23S rRNA and is also seen to make contacts with the A and possibly P site tRNAs. This chain is Large ribosomal subunit protein uL16, found in Trichodesmium erythraeum (strain IMS101).